Consider the following 118-residue polypeptide: Fluoride-specific ion channel FluC 2 (118 aa).

A run of 4 helical transmembrane segments spans residues 1–21 (MIEA…RFAI), 33–53 (FPIA…YIIG), 55–75 (GVTT…FTTF), and 93–113 (TFLL…FLGM). Na(+) contacts are provided by G70 and T73.

Belongs to the fluoride channel Fluc/FEX (TC 1.A.43) family.

It is found in the cell membrane. The catalysed reaction is fluoride(in) = fluoride(out). Its activity is regulated as follows. Na(+) is not transported, but it plays an essential structural role and its presence is essential for fluoride channel function. In terms of biological role, fluoride-specific ion channel. Important for reducing fluoride concentration in the cell, thus reducing its toxicity. The sequence is that of Fluoride-specific ion channel FluC 2 from Bacillus thuringiensis subsp. konkukian (strain 97-27).